Consider the following 430-residue polypeptide: Adenylosuccinate synthetase (430 aa).

Residues 12-18 and 40-42 contribute to the GTP site; these read GDEGKGK and GHT. The active-site Proton acceptor is the Asp-13. Residues Asp-13 and Gly-40 each contribute to the Mg(2+) site. Residues 13–16, 38–41, Thr-130, Arg-144, Gln-224, Thr-239, and Arg-303 each bind IMP; these read DEGK and NAGH. His-41 serves as the catalytic Proton donor. A substrate-binding site is contributed by 299-305; sequence VNTGRKR. GTP-binding positions include Arg-305, 331–333, and 413–415; these read KLD and STS.

It belongs to the adenylosuccinate synthetase family. Homodimer. The cofactor is Mg(2+).

The protein resides in the cytoplasm. The enzyme catalyses IMP + L-aspartate + GTP = N(6)-(1,2-dicarboxyethyl)-AMP + GDP + phosphate + 2 H(+). The protein operates within purine metabolism; AMP biosynthesis via de novo pathway; AMP from IMP: step 1/2. Plays an important role in the de novo pathway of purine nucleotide biosynthesis. Catalyzes the first committed step in the biosynthesis of AMP from IMP. This is Adenylosuccinate synthetase from Nitrobacter winogradskyi (strain ATCC 25391 / DSM 10237 / CIP 104748 / NCIMB 11846 / Nb-255).